The following is a 190-amino-acid chain: MSSFTTTNTPPPYLLRKIYHRRVNQPFSVVCCTGEPQQDIFTRRRTLTSLITFTVIGGATSSALAQEKWGTRSFIKEKYFMPGLSPEDAAARIKQTAEGLRDMREMLDHMSWRYVIFYIRLKQAYLSQDLTNAMNILPESRRNDYVQAANELVENMSELDFYVRTPKVYESYLYYEKTLKSIDNVVEFLA.

A chloroplast-targeting transit peptide spans Met1–Cys31. A thylakoid-targeting transit peptide spans Cys32–Lys68. Coiled-coil stretches lie at residues Glu87 to Leu107 and Glu139 to Leu159.

Belongs to the PsbQ family. Part of the chloroplast NDH complex, composed of a mixture of chloroplast and nucleus encoded subunits. Component of the NDH lumenal subcomplex, at least composed of PnsL1, PnsL2, PnsL3, PnsL4 and PnsL5.

It localises to the plastid. The protein localises to the chloroplast thylakoid membrane. Functionally, NDH shuttles electrons from NAD(P)H:plastoquinone, via FMN and iron-sulfur (Fe-S) centers, to quinones in the photosynthetic chain and possibly in a chloroplast respiratory chain. The immediate electron acceptor for the enzyme in this species is believed to be plastoquinone. Couples the redox reaction to proton translocation, and thus conserves the redox energy in a proton gradient. Required for both formation and activity of the chloroplast NAD(P)H dehydrogenase (NDH) complex. The polypeptide is Photosynthetic NDH subunit of lumenal location 2, chloroplastic (Arabidopsis thaliana (Mouse-ear cress)).